The chain runs to 295 residues: Bifunctional protein FolD (295 aa).

NADP(+) is bound by residues 166–168 (GRS), S191, and I232.

It belongs to the tetrahydrofolate dehydrogenase/cyclohydrolase family. As to quaternary structure, homodimer.

It catalyses the reaction (6R)-5,10-methylene-5,6,7,8-tetrahydrofolate + NADP(+) = (6R)-5,10-methenyltetrahydrofolate + NADPH. The catalysed reaction is (6R)-5,10-methenyltetrahydrofolate + H2O = (6R)-10-formyltetrahydrofolate + H(+). The protein operates within one-carbon metabolism; tetrahydrofolate interconversion. Its function is as follows. Catalyzes the oxidation of 5,10-methylenetetrahydrofolate to 5,10-methenyltetrahydrofolate and then the hydrolysis of 5,10-methenyltetrahydrofolate to 10-formyltetrahydrofolate. The chain is Bifunctional protein FolD from Rhodopseudomonas palustris (strain HaA2).